A 286-amino-acid polypeptide reads, in one-letter code: Shikimate dehydrogenase (NADP(+)) (286 aa).

Shikimate contacts are provided by residues 22–24 (SFS) and threonine 69. Lysine 73 (proton acceptor) is an active-site residue. Glutamate 85 contributes to the NADP(+) binding site. Shikimate contacts are provided by asparagine 94 and aspartate 109. Residues 133–137 (GAGGA), 157–162 (NRTIDK), and leucine 231 contribute to the NADP(+) site. Tyrosine 233 lines the shikimate pocket. Glycine 254 lines the NADP(+) pocket.

It belongs to the shikimate dehydrogenase family. In terms of assembly, homodimer.

It catalyses the reaction shikimate + NADP(+) = 3-dehydroshikimate + NADPH + H(+). The protein operates within metabolic intermediate biosynthesis; chorismate biosynthesis; chorismate from D-erythrose 4-phosphate and phosphoenolpyruvate: step 4/7. In terms of biological role, involved in the biosynthesis of the chorismate, which leads to the biosynthesis of aromatic amino acids. Catalyzes the reversible NADPH linked reduction of 3-dehydroshikimate (DHSA) to yield shikimate (SA). The polypeptide is Shikimate dehydrogenase (NADP(+)) (Alkaliphilus oremlandii (strain OhILAs) (Clostridium oremlandii (strain OhILAs))).